The primary structure comprises 244 residues: 6-carboxyhexanoate--CoA ligase (244 aa).

Belongs to the BioW family. As to quaternary structure, homodimer. Mg(2+) is required as a cofactor.

The catalysed reaction is heptanedioate + ATP + CoA = 6-carboxyhexanoyl-CoA + AMP + diphosphate. It functions in the pathway metabolic intermediate metabolism; pimeloyl-CoA biosynthesis; pimeloyl-CoA from pimelate: step 1/1. Its function is as follows. Catalyzes the transformation of pimelate into pimeloyl-CoA with concomitant hydrolysis of ATP to AMP. This Methanococcus maripaludis (strain C6 / ATCC BAA-1332) protein is 6-carboxyhexanoate--CoA ligase.